The chain runs to 95 residues: Glutamyl-tRNA(Gln) amidotransferase subunit C (95 aa).

This sequence belongs to the GatC family. Heterotrimer of A, B and C subunits.

The catalysed reaction is L-glutamyl-tRNA(Gln) + L-glutamine + ATP + H2O = L-glutaminyl-tRNA(Gln) + L-glutamate + ADP + phosphate + H(+). It carries out the reaction L-aspartyl-tRNA(Asn) + L-glutamine + ATP + H2O = L-asparaginyl-tRNA(Asn) + L-glutamate + ADP + phosphate + 2 H(+). In terms of biological role, allows the formation of correctly charged Asn-tRNA(Asn) or Gln-tRNA(Gln) through the transamidation of misacylated Asp-tRNA(Asn) or Glu-tRNA(Gln) in organisms which lack either or both of asparaginyl-tRNA or glutaminyl-tRNA synthetases. The reaction takes place in the presence of glutamine and ATP through an activated phospho-Asp-tRNA(Asn) or phospho-Glu-tRNA(Gln). This is Glutamyl-tRNA(Gln) amidotransferase subunit C from Caulobacter vibrioides (strain ATCC 19089 / CIP 103742 / CB 15) (Caulobacter crescentus).